The primary structure comprises 486 residues: Galactose-1-phosphate uridylyltransferase (486 aa).

Belongs to the galactose-1-phosphate uridylyltransferase type 2 family.

The protein resides in the cytoplasm. It catalyses the reaction alpha-D-galactose 1-phosphate + UDP-alpha-D-glucose = alpha-D-glucose 1-phosphate + UDP-alpha-D-galactose. Its pathway is carbohydrate metabolism; galactose metabolism. This chain is Galactose-1-phosphate uridylyltransferase, found in Lacticaseibacillus casei (strain BL23) (Lactobacillus casei).